The primary structure comprises 356 residues: Mitogen-activated protein kinase PMK11 (356 aa).

The 289-residue stretch at tyrosine 24–leucine 312 folds into the Protein kinase domain. Residues valine 30 to valine 38 and lysine 53 contribute to the ATP site.

Belongs to the protein kinase superfamily. CMGC Ser/Thr protein kinase family. MAP kinase subfamily. Mg(2+) serves as cofactor. Phosphorylated by MST7.

The catalysed reaction is L-seryl-[protein] + ATP = O-phospho-L-seryl-[protein] + ADP + H(+). It carries out the reaction L-threonyl-[protein] + ATP = O-phospho-L-threonyl-[protein] + ADP + H(+). In terms of biological role, mitogen-activated protein kinase; part of the MST11-MST7-PMK1 MAP kinase (MAPK) cascade that is essential for appressorium formation, penetration and invasive growth. Central regulator of appressorium development that acts downstream of the cAMP signal. The MST11-MST7-PMK1 MAP kinase cascade transduces signals from the cell surface sensors MDB2 and SHO1 that recognize various surface signals such as surface hydrophobicity, cutin monomers, and rice leaf waxes. Regulates expression of secreted fungal effector proteins implicated of host immune defenses, preventing reactive oxygen species generation and excessive callose deposition at plasmodesmata. Furthermore, controls the hyphal constriction required for fungal growth from one rice cell to the neighboring cell, enabling host tissue colonization and blast disease. Targets downstream of the PMK1-MAPK pathway include transcription factor MST12 and pathogenicity-related genes GAS1 and GAS2, both of which are expressed during appressorium formation, even if regulation of MST12 is not associated with expression of GAS1 or GAS2. The sequence is that of Mitogen-activated protein kinase PMK11 from Pyricularia oryzae (strain 70-15 / ATCC MYA-4617 / FGSC 8958) (Rice blast fungus).